The primary structure comprises 476 residues: Lactate utilization protein B (476 aa).

4Fe-4S ferredoxin-type domains lie at 304–334 and 353–382; these read GTEF…GHSY and YDEY…LHEL. Positions 313, 316, 319, 323, 366, 369, and 373 each coordinate [4Fe-4S] cluster.

It belongs to the LutB/YkgF family.

Functionally, is involved in L-lactate degradation and allows cells to grow with lactate as the sole carbon source. Has probably a role as an electron transporter during oxidation of L-lactate. This chain is Lactate utilization protein B, found in Bacillus velezensis (strain DSM 23117 / BGSC 10A6 / LMG 26770 / FZB42) (Bacillus amyloliquefaciens subsp. plantarum).